A 242-amino-acid chain; its full sequence is Sugar fermentation stimulation protein homolog (242 aa).

Belongs to the SfsA family.

The polypeptide is Sugar fermentation stimulation protein homolog (Rippkaea orientalis (strain PCC 8801 / RF-1) (Cyanothece sp. (strain PCC 8801))).